A 469-amino-acid polypeptide reads, in one-letter code: Interstitial collagenase (469 aa).

A signal peptide spans 1–18 (MPRLPLLLLLLWGTGSHG). Residues 19 to 99 (FPAATSETQE…PRCGVPDVAP (81 aa)) constitute a propeptide, activation peptide. The short motif at 90-97 (PRCGVPDV) is the Cysteine switch element. Residue cysteine 92 coordinates Zn(2+). N-linked (GlcNAc...) asparagine glycosylation is present at asparagine 120. Aspartate 124 and aspartate 158 together coordinate Ca(2+). The Zn(2+) site is built by histidine 168 and aspartate 170. Residues aspartate 175, glycine 176, glycine 178, and asparagine 180 each contribute to the Ca(2+) site. Zn(2+) is bound at residue histidine 183. Ca(2+) contacts are provided by glycine 190, glycine 192, and aspartate 194. Histidine 196 is a binding site for Zn(2+). Residues aspartate 198, aspartate 199, and glutamate 201 each contribute to the Ca(2+) site. Histidine 218 lines the Zn(2+) pocket. Glutamate 219 is an active-site residue. Zn(2+) contacts are provided by histidine 222 and histidine 228. Threonine 274 is subject to Phosphothreonine. Hemopexin repeat units follow at residues 275-324 (PEVC…WPQL), 325-371 (PNGL…FGFP), 374-422 (VKSI…FPGI), and 423-466 (GNKV…WFNC). Cysteine 278 and cysteine 466 are disulfide-bonded. Residues aspartate 285 and glutamine 329 each contribute to the Ca(2+) site. Tyrosine 360 is subject to Phosphotyrosine; by PKDCC. Residues aspartate 378 and aspartate 427 each coordinate Ca(2+).

This sequence belongs to the peptidase M10A family. The cofactor is Ca(2+). Zn(2+) is required as a cofactor. In terms of processing, tyrosine phosphorylated in platelets by PKDCC/VLK.

It is found in the secreted. The protein localises to the extracellular space. It localises to the extracellular matrix. It carries out the reaction Cleavage of the triple helix of collagen at about three-quarters of the length of the molecule from the N-terminus, at 775-Gly-|-Ile-776 in the alpha1(I) chain. Cleaves synthetic substrates and alpha-macroglobulins at bonds where P1' is a hydrophobic residue.. Can be activated without removal of the activation peptide. Functionally, cleaves collagens of types I, II, and III at one site in the helical domain. Also cleaves collagens of types VII and X. In Bos taurus (Bovine), this protein is Interstitial collagenase (MMP1).